The primary structure comprises 209 residues: Scoloptoxin SSD346 (209 aa).

The first 22 residues, Asn1–Gly22, serve as a signal peptide directing secretion.

Contains 2 disulfide bonds. As to expression, expressed by the venom gland.

The protein resides in the secreted. Functionally, may act as a voltage-gated calcium channel inhibitor. In Scolopendra dehaani (Thai centipede), this protein is Scoloptoxin SSD346.